Here is a 1137-residue protein sequence, read N- to C-terminus: Phytochrome C (1137 aa).

Over residues 1–18 (MSSSRSNNRATCSRSSSA) the composition is skewed to low complexity. Residues 1-27 (MSSSRSNNRATCSRSSSARSKHSARVV) form a disordered region. The GAF domain maps to 217-400 (NLSLLCDVLV…VFGIQINKEV (184 aa)). Cys322 contributes to the phytochromobilin binding site. PAS domains lie at 620–690 (VTNE…LQGI) and 750–824 (IQGD…TKLS). The Histidine kinase domain maps to 904–1124 (YIRQELRNPL…IVLVEFPVAQ (221 aa)).

This sequence belongs to the phytochrome family. In terms of assembly, homodimer. In terms of processing, contains one covalently linked phytochromobilin chromophore.

Regulatory photoreceptor which exists in two forms that are reversibly interconvertible by light: the Pr form that absorbs maximally in the red region of the spectrum and the Pfr form that absorbs maximally in the far-red region. Photoconversion of Pr to Pfr induces an array of morphogenic responses, whereas reconversion of Pfr to Pr cancels the induction of those responses. Pfr controls the expression of a number of nuclear genes including those encoding the small subunit of ribulose-bisphosphate carboxylase, chlorophyll A/B binding protein, protochlorophyllide reductase, rRNA, etc. It also controls the expression of its own gene(s) in a negative feedback fashion. The chain is Phytochrome C (PHYC) from Oryza sativa subsp. japonica (Rice).